Reading from the N-terminus, the 330-residue chain is GTP 3',8-cyclase (330 aa).

One can recognise a Radical SAM core domain in the interval 9-225 (RFGRTVNYVR…IRRHHELIPA (217 aa)). R18 lines the GTP pocket. [4Fe-4S] cluster is bound by residues C25 and C29. An S-adenosyl-L-methionine-binding site is contributed by Y31. C32 contacts [4Fe-4S] cluster. Position 67 (R67) interacts with GTP. G71 contacts S-adenosyl-L-methionine. T97 contributes to the GTP binding site. Residue S121 participates in S-adenosyl-L-methionine binding. K158 lines the GTP pocket. An S-adenosyl-L-methionine-binding site is contributed by M192. Residues C256 and C259 each contribute to the [4Fe-4S] cluster site. 261-263 (RVR) provides a ligand contact to GTP. C273 contacts [4Fe-4S] cluster.

Belongs to the radical SAM superfamily. MoaA family. Monomer and homodimer. [4Fe-4S] cluster is required as a cofactor.

It catalyses the reaction GTP + AH2 + S-adenosyl-L-methionine = (8S)-3',8-cyclo-7,8-dihydroguanosine 5'-triphosphate + 5'-deoxyadenosine + L-methionine + A + H(+). It participates in cofactor biosynthesis; molybdopterin biosynthesis. Functionally, catalyzes the cyclization of GTP to (8S)-3',8-cyclo-7,8-dihydroguanosine 5'-triphosphate. The chain is GTP 3',8-cyclase from Marinobacter nauticus (strain ATCC 700491 / DSM 11845 / VT8) (Marinobacter aquaeolei).